Reading from the N-terminus, the 555-residue chain is Energy-dependent translational throttle protein EttA (555 aa).

ABC transporter domains are found at residues 6-259 (YTMH…AQEA) and 324-550 (LEVS…RIKY). 39–46 (GLNGAGKS) serves as a coordination point for ATP. The tract at residues 95-139 (SEVVNALKRLDEVYALYADPDADFDKLAAEQGRLEEIIQAHDGHN) is arm. Residues 242 to 322 (GNYSSWLEQK…IPPGPRLGDK (81 aa)) are ptIM. 356–363 (GPNGAGKS) is a binding site for ATP.

This sequence belongs to the ABC transporter superfamily. ABCF family. Translational throttle EttA subfamily. In terms of assembly, monomer. Probably contacts ribosomal proteins L1, L5, L33 and S7, the 16S and 23S rRNA and the P-site containing tRNA(fMet).

The protein localises to the cytoplasm. The enzyme catalyses ATP + H2O = ADP + phosphate + H(+). A translation factor that gates the progression of the 70S ribosomal initiation complex (IC, containing tRNA(fMet) in the P-site) into the translation elongation cycle by using a mechanism sensitive to the ATP/ADP ratio. Binds to the 70S ribosome E-site where it modulates the state of the translating ribosome during subunit translocation. ATP hydrolysis probably frees it from the ribosome, which can enter the elongation phase. This is Energy-dependent translational throttle protein EttA from Escherichia coli O157:H7.